Here is a 1127-residue protein sequence, read N- to C-terminus: MPKRTDIKSVMVIGSGPIVIGQAAEFDYSGTQACRVLREEGIRVILVNSNPATIMTDPEMADATYIEPIATPILEQIIAKERPDALLPTLGGQTALNAAMALGEAGVLKKYNVELIGASLEAIDRGEDRELFKKVVDEAGAESARSDIAHSIEEVDKIAEKFGYPLVVRPSFTMGGLGSGIAHNEEELHRIAGAGIHYSPTDEVLIEEGIEGWKEFELELMRDRNDNVVVVCPIENVDPVGVHTGDSITVAPCFTLTDREYQKLRDIGIAIIRGVGVDTGGCNIQFAVHPDTGRIIVIEMNPRVSRSSALASKATGFPIAKIATKLALGYTLDEIRNDITQSTPASFEPTIDYVVTKVPRFAFEKFPGADPTLTTSMKSVGEAMALAGNFQESLGKAMRSIDKRHMGFNWDGEKPSAEEVAELLEAIHTPTEHRYLQLMRAIWGGATLEQVFAATKIDPWFLKQIFLINETAMTVREAETLTPRLLKKAKLAGLSDVQVAHLRGLGDEGENTIRELRWTYGLRPVYKTVDTCAAEFDAATPYYYSCYADETELRPREREAVIILGSGPNRIGQGIEFDYTCVHAVQELGKDYDTIMVNCNPETVSTDYDMSDRLYFEPLTFEDVLEIYEAEKKMGPVKGVIVQLGGQTPLSLAARLKAAGVPILGTTPESIDLAENRELFGEVLKKAEMNAPRYGTALSLEEAKEAAHRIGYPVLVRPSYVLGGRGMEIVYDDKQLNKYVDRALAEAKADTVVSGRLPSPLLIDKFLQDAIEIDVDALFDGEELYIGGIMEHVEEAGVHSGDAACTLPPSTLSDDQIRRLREGTYAIAKGCHVQGLINVQYAFMANTLYVIEANPRASRTVPFASKATGVALAKAAARIMAGETIADQRANGLLLPKGDGGDIHPGQQVAVKESVLPFKRFRTPVGKTVDILLGPEMRSTGEVMGFDRDFPHAFAKSQLAAYDGGLPTHGNVFISVNDTDKRQLPLIAVRLEELGFKLWATEGTASVLRRYGIESNIVDKISTRVDTDPEAPVEVHHAAGSVGKNVVQLIEEGKIDMILNTPNSRGSRSDGYSIRAAAIAADLPQFTTITEFQAALLAIEAVKHNDYQIMSIQEHSKQLFELERREF.

Positions 1-402 (MPKRTDIKSV…SLGKAMRSID (402 aa)) are carboxyphosphate synthetic domain. Residues arginine 129, arginine 169, glycine 175, glycine 176, glutamate 208, isoleucine 210, glutamate 215, glycine 241, valine 242, histidine 243, glutamine 285, and glutamate 299 each coordinate ATP. Residues 133-328 (KKVVDEAGAE…IAKIATKLAL (196 aa)) form the ATP-grasp 1 domain. The Mg(2+) site is built by glutamine 285, glutamate 299, and asparagine 301. Residues glutamine 285, glutamate 299, and asparagine 301 each coordinate Mn(2+). Residues 403-551 (KRHMGFNWDG…YYYSCYADET (149 aa)) form an oligomerization domain region. The interval 552-962 (ELRPREREAV…AFAKSQLAAY (411 aa)) is carbamoyl phosphate synthetic domain. In terms of domain architecture, ATP-grasp 2 spans 681-881 (GEVLKKAEMN…LAKAAARIMA (201 aa)). ATP-binding residues include arginine 717, lysine 765, leucine 767, glutamate 772, glycine 797, valine 798, histidine 799, serine 800, glutamine 840, and glutamate 852. Glutamine 840, glutamate 852, and asparagine 854 together coordinate Mg(2+). The Mn(2+) site is built by glutamine 840, glutamate 852, and asparagine 854. The tract at residues 963 to 1127 (DGGLPTHGNV…QLFELERREF (165 aa)) is allosteric domain. Residues 964–1127 (GGLPTHGNVF…QLFELERREF (164 aa)) form the MGS-like domain.

The protein belongs to the CarB family. In terms of assembly, composed of two chains; the small (or glutamine) chain promotes the hydrolysis of glutamine to ammonia, which is used by the large (or ammonia) chain to synthesize carbamoyl phosphate. Tetramer of heterodimers (alpha,beta)4. The cofactor is Mg(2+). Mn(2+) is required as a cofactor.

It carries out the reaction hydrogencarbonate + L-glutamine + 2 ATP + H2O = carbamoyl phosphate + L-glutamate + 2 ADP + phosphate + 2 H(+). The enzyme catalyses hydrogencarbonate + NH4(+) + 2 ATP = carbamoyl phosphate + 2 ADP + phosphate + 2 H(+). It functions in the pathway amino-acid biosynthesis; L-arginine biosynthesis; carbamoyl phosphate from bicarbonate: step 1/1. Its pathway is pyrimidine metabolism; UMP biosynthesis via de novo pathway; (S)-dihydroorotate from bicarbonate: step 1/3. Its function is as follows. Large subunit of the glutamine-dependent carbamoyl phosphate synthetase (CPSase). CPSase catalyzes the formation of carbamoyl phosphate from the ammonia moiety of glutamine, carbonate, and phosphate donated by ATP, constituting the first step of 2 biosynthetic pathways, one leading to arginine and/or urea and the other to pyrimidine nucleotides. The large subunit (synthetase) binds the substrates ammonia (free or transferred from glutamine from the small subunit), hydrogencarbonate and ATP and carries out an ATP-coupled ligase reaction, activating hydrogencarbonate by forming carboxy phosphate which reacts with ammonia to form carbamoyl phosphate. In Bifidobacterium longum (strain DJO10A), this protein is Carbamoyl phosphate synthase large chain.